Here is a 927-residue protein sequence, read N- to C-terminus: Phosphoenolpyruvate carboxylase (927 aa).

Catalysis depends on residues His-160 and Lys-589.

It belongs to the PEPCase type 1 family. The cofactor is Mg(2+).

It catalyses the reaction oxaloacetate + phosphate = phosphoenolpyruvate + hydrogencarbonate. Functionally, forms oxaloacetate, a four-carbon dicarboxylic acid source for the tricarboxylic acid cycle. The polypeptide is Phosphoenolpyruvate carboxylase (Rhodopseudomonas palustris (strain BisA53)).